We begin with the raw amino-acid sequence, 550 residues long: Carboxylesterase 4A (550 aa).

Positions 1 to 20 are cleaved as a signal peptide; the sequence is MNWILCLSLTLLLVVQTAWG. A disulfide bridge connects residues Cys-88 and Cys-116. Residue Ser-221 is the Acyl-ester intermediate of the active site. Cys-273 and Cys-284 are oxidised to a cystine. Asn-276 carries N-linked (GlcNAc...) asparagine glycosylation. Glu-353 serves as the catalytic Charge relay system. N-linked (GlcNAc...) asparagine glycosylation is present at Asn-386. Residue His-465 is the Charge relay system of the active site.

Belongs to the type-B carboxylesterase/lipase family.

The protein localises to the secreted. Functionally, probable carboxylesterase. The chain is Carboxylesterase 4A (CES4A) from Bos taurus (Bovine).